We begin with the raw amino-acid sequence, 345 residues long: GTP cyclohydrolase-2 (345 aa).

A disordered region spans residues 1–27 (MTIDNYDNSKQDSSKYEVSGTGDGRNG). 143-147 (RIHSE) is a binding site for GTP. Cys-148, Cys-159, and Cys-161 together coordinate Zn(2+). GTP is bound by residues Gln-164, 197–199 (EGR), and Thr-219. Asp-231 serves as the catalytic Proton acceptor. The active-site Nucleophile is Arg-233. Residues Thr-254 and Lys-259 each contribute to the GTP site. A disordered region spans residues 312–345 (PLKLHTNPQPTETSEAQNQNRMNSALSSTSTLAI). A compositionally biased stretch (polar residues) spans 317 to 345 (TNPQPTETSEAQNQNRMNSALSSTSTLAI).

This sequence belongs to the GTP cyclohydrolase II family. Zn(2+) is required as a cofactor.

It carries out the reaction GTP + 4 H2O = 2,5-diamino-6-hydroxy-4-(5-phosphoribosylamino)-pyrimidine + formate + 2 phosphate + 3 H(+). It functions in the pathway cofactor biosynthesis; riboflavin biosynthesis; 5-amino-6-(D-ribitylamino)uracil from GTP: step 1/4. Catalyzes the conversion of GTP to 2,5-diamino-6-ribosylamino-4(3H)-pyrimidinone 5'-phosphate (DARP), formate and pyrophosphate. The sequence is that of GTP cyclohydrolase-2 (RIB1) from Saccharomyces cerevisiae (strain ATCC 204508 / S288c) (Baker's yeast).